Consider the following 452-residue polypeptide: Isocitrate dehydrogenase [NADP], mitochondrial (452 aa).

The transit peptide at 1-39 directs the protein to the mitochondrion; the sequence is MAGYLRAVSSLCRASGSTRTWAPAALNVPSWPEQPRRHY. N6-acetyllysine is present on residues Lys-45, Lys-48, Lys-67, and Lys-69. N6-acetyllysine; alternate occurs at positions 80 and 106. N6-succinyllysine; alternate is present on residues Lys-80 and Lys-106. Residues 115–117 and Arg-122 contribute to the NADP(+) site; that span reads TIT. Residue Thr-117 coordinates D-threo-isocitrate. Residues 134 to 140 and Arg-149 contribute to the D-threo-isocitrate site; that span reads SPNGTIR. Residue Lys-155 is modified to N6-acetyllysine. N6-acetyllysine; alternate is present on Lys-166. Lys-166 is modified (N6-succinyllysine; alternate). A D-threo-isocitrate-binding site is contributed by Arg-172. N6-acetyllysine; alternate occurs at positions 180 and 193. An N6-succinyllysine; alternate mark is found at Lys-180 and Lys-193. Lys-199 is subject to N6-acetyllysine. Residue Lys-256 is modified to N6-acetyllysine; alternate. At Lys-256 the chain carries N6-succinyllysine; alternate. N6-acetyllysine is present on residues Lys-263, Lys-272, Lys-275, and Lys-280. Lys-282 is modified (N6-acetyllysine; alternate). Lys-282 bears the N6-succinyllysine; alternate mark. Position 291 (Asp-291) interacts with Mn(2+). Lys-299 is a binding site for NADP(+). A Mn(2+)-binding site is contributed by Asp-314. NADP(+) contacts are provided by residues 349–354 and Asn-367; that span reads GTVTRH. An N6-acetyllysine; alternate modification is found at Lys-384. Lys-384 carries the N6-succinyllysine; alternate modification. N6-acetyllysine occurs at positions 400, 413, and 442.

Belongs to the isocitrate and isopropylmalate dehydrogenases family. In terms of assembly, homodimer. Requires Mg(2+) as cofactor. It depends on Mn(2+) as a cofactor. Post-translationally, acetylation at Lys-413 dramatically reduces catalytic activity. Deacetylated by SIRT3.

The protein resides in the mitochondrion. The enzyme catalyses D-threo-isocitrate + NADP(+) = 2-oxoglutarate + CO2 + NADPH. Plays a role in intermediary metabolism and energy production. It may tightly associate or interact with the pyruvate dehydrogenase complex. The sequence is that of Isocitrate dehydrogenase [NADP], mitochondrial (Idh2) from Rattus norvegicus (Rat).